The chain runs to 1141 residues: Membrane-associated protein gex-3 (1141 aa).

This sequence belongs to the HEM-1/HEM-2 family. In terms of assembly, interacts with aco-1, gei-13 and gex-2. Interacts with gex-3. Expressed in neurons.

It is found in the cytoplasm. Rac effector required for tissue morphogenesis, cell migrations and egg laying. May play a role in egg laying and in yolk protein clatherin-mediated endocytosis by oocytes during oogenesis. Plays a role in the formation of gap junctions between EA and EP endodermal precursor cells in embryos. The sequence is that of Membrane-associated protein gex-3 from Caenorhabditis elegans.